We begin with the raw amino-acid sequence, 199 residues long: GTP cyclohydrolase-2 (199 aa).

49 to 53 lines the GTP pocket; the sequence is RIHSE. Positions 54, 65, and 67 each coordinate Zn(2+). GTP is bound by residues Gln-70, 92-94, and Thr-114; that span reads EGR. Asp-126 serves as the catalytic Proton acceptor. Residue Arg-128 is the Nucleophile of the active site. Residues Thr-149 and Lys-154 each contribute to the GTP site. The tract at residues 172 to 199 is disordered; the sequence is ETGRNPHNSHYLETKRGKLGHLLEGDSE.

It belongs to the GTP cyclohydrolase II family. It depends on Zn(2+) as a cofactor.

The catalysed reaction is GTP + 4 H2O = 2,5-diamino-6-hydroxy-4-(5-phosphoribosylamino)-pyrimidine + formate + 2 phosphate + 3 H(+). It participates in cofactor biosynthesis; riboflavin biosynthesis; 5-amino-6-(D-ribitylamino)uracil from GTP: step 1/4. Catalyzes the conversion of GTP to 2,5-diamino-6-ribosylamino-4(3H)-pyrimidinone 5'-phosphate (DARP), formate and pyrophosphate. This chain is GTP cyclohydrolase-2, found in Teredinibacter turnerae (strain ATCC 39867 / T7901).